We begin with the raw amino-acid sequence, 469 residues long: GDP-fucose protein O-fucosyltransferase 3 (469 aa).

The Cytoplasmic portion of the chain corresponds to Met1–Arg9. Residues Phe10–Val30 traverse the membrane as a helical; Signal-anchor for type II membrane protein segment. The Lumenal portion of the chain corresponds to Glu31 to Trp469. N-linked (GlcNAc...) asparagine glycosylation is found at Asn100, Asn158, Asn308, and Asn333. Cys379 and Cys382 are disulfide-bonded. Asn455 carries an N-linked (GlcNAc...) asparagine glycan.

It belongs to the glycosyltransferase 10 family.

Its subcellular location is the endoplasmic reticulum membrane. It carries out the reaction L-threonyl-[protein] + GDP-beta-L-fucose = 3-O-(alpha-L-fucosyl)-L-threonyl-[protein] + GDP + H(+). The catalysed reaction is L-seryl-[protein] + GDP-beta-L-fucose = 3-O-(alpha-L-fucosyl)-L-seryl-[protein] + GDP + H(+). It functions in the pathway protein modification; protein glycosylation. In terms of biological role, protein O-fucosyltransferase that specifically catalyzes O-fucosylation of serine or threonine residues in EMI domains of target proteins. Attaches fucose through an O-glycosidic linkage. O-fucosylation of EMI domain-containing proteins may be required for facilitating protein folding and secretion. This is GDP-fucose protein O-fucosyltransferase 3 (fut10) from Xenopus laevis (African clawed frog).